The sequence spans 477 residues: Cysteine--tRNA ligase (477 aa).

Zn(2+) is bound at residue C29. The 'HIGH' region motif lies at 31–41; that stretch reads PTVYNYFHVGN. Zn(2+)-binding residues include C209, H234, and E238. The short motif at 267–271 is the 'KMSKS' region element; sequence KMSKS. Position 270 (K270) interacts with ATP.

This sequence belongs to the class-I aminoacyl-tRNA synthetase family. In terms of assembly, monomer. Requires Zn(2+) as cofactor.

The protein resides in the cytoplasm. It carries out the reaction tRNA(Cys) + L-cysteine + ATP = L-cysteinyl-tRNA(Cys) + AMP + diphosphate. In Desulfitobacterium hafniense (strain DSM 10664 / DCB-2), this protein is Cysteine--tRNA ligase.